Reading from the N-terminus, the 246-residue chain is UDP-2,3-diacylglucosamine hydrolase (246 aa).

5 residues coordinate Mn(2+): Asp-8, His-10, Asp-41, Asn-79, and His-114. 79–80 (NR) serves as a coordination point for substrate. Residues Asp-122, Ser-160, Lys-164, Lys-167, and His-195 each coordinate substrate. His-195 and His-197 together coordinate Mn(2+).

Belongs to the LpxH family. Mn(2+) is required as a cofactor.

It is found in the cell inner membrane. It carries out the reaction UDP-2-N,3-O-bis[(3R)-3-hydroxytetradecanoyl]-alpha-D-glucosamine + H2O = 2-N,3-O-bis[(3R)-3-hydroxytetradecanoyl]-alpha-D-glucosaminyl 1-phosphate + UMP + 2 H(+). It functions in the pathway glycolipid biosynthesis; lipid IV(A) biosynthesis; lipid IV(A) from (3R)-3-hydroxytetradecanoyl-[acyl-carrier-protein] and UDP-N-acetyl-alpha-D-glucosamine: step 4/6. Functionally, hydrolyzes the pyrophosphate bond of UDP-2,3-diacylglucosamine to yield 2,3-diacylglucosamine 1-phosphate (lipid X) and UMP by catalyzing the attack of water at the alpha-P atom. Involved in the biosynthesis of lipid A, a phosphorylated glycolipid that anchors the lipopolysaccharide to the outer membrane of the cell. The chain is UDP-2,3-diacylglucosamine hydrolase from Tolumonas auensis (strain DSM 9187 / NBRC 110442 / TA 4).